Consider the following 125-residue polypeptide: MWLSILAIFCGAGLGALLRTGFNLLSVGVASVIPLGTLISNMVGGYLIGIALAFFGNNPHLSPEWKLLIITGFLGGLTTFSSFSAEVVTMIQRGEFTWALGTALLHLVGSLVLTLLGIWTYQAIK.

4 consecutive transmembrane segments (helical) span residues tryptophan 2–phenylalanine 22, leucine 35–phenylalanine 55, leucine 68–valine 88, and tryptophan 98–isoleucine 118. Residues glycine 75 and threonine 78 each contribute to the Na(+) site.

It belongs to the fluoride channel Fluc/FEX (TC 1.A.43) family.

It localises to the cell inner membrane. The catalysed reaction is fluoride(in) = fluoride(out). With respect to regulation, na(+) is not transported, but it plays an essential structural role and its presence is essential for fluoride channel function. Fluoride-specific ion channel. Important for reducing fluoride concentration in the cell, thus reducing its toxicity. This Polynucleobacter asymbioticus (strain DSM 18221 / CIP 109841 / QLW-P1DMWA-1) (Polynucleobacter necessarius subsp. asymbioticus) protein is Fluoride-specific ion channel FluC.